We begin with the raw amino-acid sequence, 260 residues long: Taurine import ATP-binding protein TauB (260 aa).

The region spanning 6–235 is the ABC transporter domain; that stretch reads AQQVSVVYAS…RYAHGEPMRS (230 aa). 40–47 lines the ATP pocket; the sequence is GASGCGKS.

It belongs to the ABC transporter superfamily. Taurine importer (TC 3.A.1.17.1) family. As to quaternary structure, the complex is composed of two ATP-binding proteins (TauB), two transmembrane proteins (TauC) and a solute-binding protein (TauA).

Its subcellular location is the cell inner membrane. It carries out the reaction taurine(out) + ATP + H2O = taurine(in) + ADP + phosphate + H(+). Part of the ABC transporter complex TauABC involved in taurine import. Responsible for energy coupling to the transport system. The protein is Taurine import ATP-binding protein TauB of Burkholderia pseudomallei (strain 1710b).